The chain runs to 361 residues: 4-hydroxytryptamine kinase (361 aa).

Residues asparagine 37, lysine 57, and 118–120 contribute to the ATP site; that span reads QDV. Aspartate 224 is an active-site residue. Position 248 to 250 (248 to 250) interacts with ATP; that stretch reads DWE.

It belongs to the methylthioribose kinase family. Monomer. Mg(2+) serves as cofactor.

The enzyme catalyses 4-hydroxytryptamine + ATP = norbaeocystin + ADP + H(+). The catalysed reaction is psilocin + ATP = psilocybin + ADP + H(+). It carries out the reaction 4-hydroxy-N,N,N-trimethyltryptamine + ATP = aeruginascin + ADP + H(+). It functions in the pathway secondary metabolite biosynthesis. In terms of biological role, 4-hydroxytryptamine kinase; part of the gene cluster that mediates the biosynthesis of psilocybin, a psychotropic tryptamine-derived natural product. The first step in the pathway is the decarboxylation of L-tryptophan to tryptamine by the decarboxylase psiD. PsiD does not decarboxylate phenylalanine, tyrosine, or 5-hydroxy- L -tryptophan (5-HTP). 4-hydroxy-L-tryptophan is accepted as substrate by psiD as well. The cytochrome P450 monooxygenase psiH then converts tryptamine to 4-hydroxytryptamine. The kinase psiK catalyzes the 4-O-phosphorylation step by converting 4-hydroxytryptamine into norbaeocystin. The methyltransferase psiM then catalyzes iterative methyl transfer to the amino group of norbaeocystin to yield psilocybin via a monomethylated intermediate, baeocystin. 4-hydroxy-6-methyl-l-tryptophancan also be converted the decarboxylase PsiD, kinase PsiK, and methyltransferase PsiM into respectively 6-methyl-norbaeocystin, 6-methylbaeocystin, and 6-methylpsilocybin. PsiK kinase can also turn psilocin into psilocybin. This activity may represent a protective mechanism to rephosphorylate the unstable psilocin to the stable psilocybin in case of intracellular ester cleavage. Moreover, psiK is able to O-phosphorylate the quaternary amine 4-hydroxy-N,N,N-trimethyltryptamine (4-OH-TMT) to yield aeruginascin, another bioactive compound found in Psilocybe species. The sequence is that of 4-hydroxytryptamine kinase from Psilocybe cyanescens.